A 268-amino-acid chain; its full sequence is Small ribosomal subunit protein eS1 (268 aa).

Positions 1–21 (MAVGKNKGLSKGGKKGGKKKV) are disordered.

This sequence belongs to the eukaryotic ribosomal protein eS1 family. Component of the small ribosomal subunit. Mature ribosomes consist of a small (40S) and a large (60S) subunit. The 40S subunit contains about 33 different proteins and 1 molecule of RNA (18S). The 60S subunit contains about 49 different proteins and 3 molecules of RNA (28S, 5.8S and 5S).

It is found in the cytoplasm. Functionally, essential for oogenesis; required for late follicle cell development. In Drosophila virilis (Fruit fly), this protein is Small ribosomal subunit protein eS1.